The primary structure comprises 5098 residues: MSRFSCIFPTLTDGYVPNPDNTRAAGQRTYAIDLSRRNAPSSETESHILAAWGLVLYSYVGTDEVAFYVVPKSGPDTTALAELKVEGDMSRQALTHAAEQLFPTGSVGAGQVSGDTANTIIDFANDIESLFVTQTEESFLSLHVHGDEQGHVSLSLTYHLSLLTDLQAANVGTAMAQALAEVGKDDCDRLIKDLNLMSPTHLEHIWKFNANVPGTWEECFHDVIERHAANRPHSLAVDAWDTKLTYADLVREASLLAAYLQQRGVRPGSVVPISFERSGAALVAMLAVSKAGGAFVSVPPNLPAGRLDAILEVIEAPFVVTWSKYESFWAERLPTLPIDNYPKPSADAAVEALGKPEDLFYVIFTSGSTGRPKGCMLSHSNWLNGALRNAPSWKYGPESRVLQMLSHTFDMSLLEICTSLGSGACVCVPRTEEIETSVSDAINRWQVNHVIMTPSLARALRPDDVPGLKTMCLGGEAFPKEIVTMWSERINLWQFYGPSECSINSSSRAITRPDADPLNIGPPNSAACWVVDTQDYNKLVPVGAIGELLVSGPIVGMGYLKNPVKTAEAFLDQVGFVAKDDPQFGGFRFYRTGDLVRWNSDGTITFCGRADTQVKLNGQRLELAEVEYQLGLEAGVQYAIAMAPQTGRCKNNLIAILTVKGTSTSNQGNAAEISLLDRRDPIVQQTVKKLRSQLQHALPRYMVPTIWAFVGRMPMSPSGKIDRVQLRNWVQDMSQEAFDAITGRSFEAEDHVLGLSRLEQEIQLAWAEALGLSAAEVGVQQPFVALGGDSIKALDAVARCRARQIKISMVHILSCEGVREAASLAKVQETPAQQVAEMAVDYSDLWTRLSTDYELGKLGISQLEEVEDVFPCTTMQEGMFLGQIRRPGAYHMRFFHRVQLKGGCLPPVERIQQAWAALVERHPSLRTVFVDDLSPEAIYHSVVLRSVPMELTMREVPRDLNPEAALAMFTEELVPFRPNAPLHRMLLLTCRGRVPYFMLEISHVIMDGYALSVFRREFIQACSSTAPLPRGPDYRMFANYHRTRQTDESAKYWTDYLADCTGCHIPTHAEAAPTDVPPKWPRTLQRRDFGFDNSAAFLQRCKERQVTLACAIRAAWALVLRAYTQSQDVCFGYVSSGRNVPVPEVETIFGLCLSMQVCRAKLSEASTMARLARKIQEDYVASLPFQHYPLAEAQRGLKQTRGQGLFNTAISMEWVPPTAEDENALLDLEEIREQDDPTEYDIAISVDVHEGHIKLGFLYWPNLTDFEIAHLAEALQGALNCFAFQPDEALDSLTLLQASDFCSTLGDRSTMLPLEAVRGNVMSMIDGWVTRQPESAAIDGWDGSLSYKKLHEQSSWVAHNLLHQGVQPGDRVLVCADRSSRTVATILGLVRAGCVLVLSTPTDPEKRLQWLAQKCNAALVVADPAYEKRFATAGPRVLSTTSVCVPAAWDYEFPALDEQDLVSILFTSGSTGTPKGTLMDHGALATSVLLGHGRTLRFSRHTRMLHFASLTFDAALAEIFTTLAHGGCICVPCEEDRLSDVPGCISRFAVNTAMLTPSVGRLLDPGALPTLKALVMIGEPMSRLDVERFAPVLDLYNGAGPTETSIMVTIAGPMKPTDDPVNLGYPVTGVRLWVTEAENPNRLAPLGAVGELIVEGRLVTRGYLDDPSRTQEAFLTSLPWLPSQHALYRTGDLVRYADDGSLRYMGRKDTQVKLRGQRIELQEVEYHLRKILPQAQVVVEMVVPEGKMRAQASLVAFVSGLTAADVESSSACNFEESMPMSQIVFPRSALQTLEEALPRHMIPSVYYALDTIPLSINGKVDRRRLREMGAALLASSAAHKGAVDEMSEPVKWTAASELERTLSELWAATLELEAEAIHCDDSFFELGGDSVSAMKLVAMARDQFKLSLSVPQMFRYPTIRQLAAEFGEPAGQSASSASSTTEEGFTFSTPDDSSTNDGVDDDFLQLATAQLAQLAREKGKKVDIASLLKQLQGSSSSSKTPSGSSSSSSSSSRKKKSARVVSPVKVPAPVPVPFSLLDGGADVVEKVCVYAVDQCKIPHEDIEDIYPATALQEGMMALMARTPGVYTTTLTCELPEQVDFARLHAAWDKTAEAHPILRTRIILTDNNTAMQVVQRAKELPWDTYYLQDGDILPDLTSNMTLGSPLLRLAEIHRQDQPRMLMVAIHHALYDGWSMPLLKQAVEDVYHGRPLQSQPFTPFINYLNAGKPAAQAFWTAHLDSFAGGVFPTLPSIDHHVQLTERRTRSLTVPAALPGSQYTLATKIQTAWAVTVSRYAEAEDIVFGTVSTGRSAPVPAIDRMVGPTITTVPVRISLSDQAERVISLLQRVQEDGWNRMDHEHLGLQHIRRLGESCAATCSLQTLLVIQPREQPRAKSGSTLLAGLQDVAELEGVDTYPLMLVCEPDGASLHLTAMFDPAVLDEVMLGRMLAHWELILTQLWSEPDMAVMELDALSHSDRQTLVRWNAGERVADGCAHDAVHEWSVRTPHAPAVCAWDGEWTYEELEKCSSLIVRQILAHGVSSGDFVALYHEKSRWAAAGILAVFKAGGILVTLDPAHPKDRIKDIVYQARPRLILTSQSLLGEARELEVPVLSVSFAASQQTPEECSPLPIVSSTQAAYAPFTSGSTGRPKGIVLDHRGLAASTASVAHACLLRPASRVLHFASFAFDASMMEHLIAWHAGGCLCIPDETARQTDLASCIRDFEITWAFLTPSCLRLITPDDVQSLEALGLGGESMTSEDISIWGPRLRQIVQLYGPAECCIVAALTEVTKPSENRLIGRPNACRCWVVDPQNPDRLAPLGAVGELVIEGITVGWGYIDDPERTTQAFIRPPTWLQTLYPNSQQPGRLYRTGDLVRYAGADGKLTFIGRRDGQLKLHGQRIELADVEAHLRPLMPGTQKIVVEMVHSADNQHPLLAAFVEEPLASQNPSEQEVGLLHPSQTQCALDVKAIDSVLSRMVPQYMIPSMYLHISRLPLSASGKLNRRHLREIVAEFPRQRLNEYAAGSGLTVPDRPVTAQEREMQAIWARVLSLDPDTIGINEDFFRIGGDSISGMQVATKCNAAGMHITGADLFRHRTIEQLMRHLSATRKSGCASISLPAEPVGEWVALAPIQQLFFEIAPQGPNHFNQSLLLRTGRRVSVEELAGGLDILVERHSMLRARFCRDDSGQWSQQVRSLGSYPASAFYRLATHNQVAPQSLPTLLTASQLALSIQEGPLLAVDLVDLADGAQLVYLVAHHLIIDLVSWRILHGELEEYLQTGSLASATGSVSFLTWSRAQAEYSANHLTPTRALPDFQEANDGFDAPKYWGISSESNTFGQTSSSRFTLDRTVTDQLFGSANNVLDTRPVEILQAALWYSFTRSLTDRPGPSIYVEGHGREPWTESIDLSRTVGWFTTMSPLVSAPWDSLSRTRMRDFLDALSYIKDQRRRIPANGWAYFTSRYLNDEGKVAYGRMKSVVEIMFNYMGQYQEMNREDAILQLAGDDIQSGTGAADIAGNVPRFSLIDVSAFTANGCLTFEFIFPESMQQDARLKQWFKECERTLIVAASTLSTESPRKTLTDFPLMPALTYDQLNQCLDQTLPSMGLCARDVVNIYPCSSVQQGMLLAQLRDQQAYQQRLRFQVNSRGPTDRLTLERVKDAWTEVINRHDILRTLLLPVSDYNHLDQVVMAPGSLQHLVRMNAMDANPTQGLPHSINITSDSTGTVICEWNVSHALVDAMSIAVIQREVNQALQGSLGQHQNLPRYADYVQWLSLQDNTETQAYWQNYLEGVEPCLFPKLTSLPDKVNPEGTISAIRATWTRDARMHDLCQKHGITLTNLFHMIWALVLGAYVGTDEVCFGYTTLGRDVPVDGVEKMVGPLVNVVATIVQLQEDDSILNALLTHQTHLTNSLQHQHYALADLYASSGLVGSRLFNTIVSLQDMSHFDAPDEQPTWLEMLPANDVSEYDVALNIGVDQSSIQLVCSYRTLSLSAVQADALLRTASHVLSEMLRDPTQRFSELEVISPECKEQLMKWNAAMPAPTEEYIHEKIQGQCRLHASREAVCAWDGIFTYAEVDDLSSRLAARLIRMGVTSEHIIPIYAPKSRWTVIAILGVLKSGAAFTLLETSHPMARLQVICHEIKADMIIAPASHAGPAANLAPIIVGLDRITSMSPQTSDLLPTVGMPPAAEALAYLIFTSGSTGNPKGVMVTHQNLCSNASIMTTSVNMMSDSRVLQFASHAFDGCLWEILGPLFAGACLIIPSESESQEDLAGCIERMVVTWAFLTPSVARILKPETLPSLRVLTLGGEPIAASDLDMWRGHVQVVCAYGPTETTILASTTSPSTFPTDGRDIGVPTGSSLWIVDKRNYLKLAPLGATGELLIEGPNVSQGYLGDPEKTNEAFPVAPRWLSQLRQSPTRIYRTGDLVRFDTSTGTIRFVGRKDNQIKFHGQRIELGEIEHHAQQAFSNSSTVIVDLITPAQPQRPYIVAFVHQPDTKTATADPIDAILLPPSESFRAEALGAQNHMHKRLPHYMVPTVFLPLQWLPLSGTGKADRKRLRQCALALPSPDLDAYRATALMKRMPSTAAERKMQELVATVLGRGVSEIGMDDSFFYLGGDSVQAMRLVAEGRHQGLALSLRAIFDAPRLGDLAYRTTNLVKVNQPIQATSPVTLRDECNHIETIVATHPIKKTDVVDVLPTTSFQRHWLDIQLMSYIVVDIPGPIDPERLLTAMQRVVEAHPILRASFVPYEDTTMQVILRTRVAMTAADLSTTTVEDICRQDEDAPMILGTPYMRVILASQGDVGHKLIMRLSHAQYDAVSLSLLMNDLRHAYANETRPFPSSHSPPFTDYITYQQTLRADPTATTFWHSLLQDVPITCLNLQPAETSTSNGTPITRTRDINISPFPSLPNGITIATAVKAAWSLVLAQKTDSLAVIFGQVVHGRGIALPGVEGIVGPCANITPVVARLGRQTAGLELMQTLQDQHRSAMPYETVDLDDALAYSKDSQARRKGLQTIVQHQNNVVVDDMELSLGEVKCGVDVRAVDHVPREVWIYSSVDEKRPRILEVKIMSSTLVLNEEVAEELMDLLIEKIVGLFRDPEGVCV.

An adenylation 1 region spans residues 225–616 (ERHAANRPHS…CGRADTQVKL (392 aa)). Positions 756-829 (SRLEQEIQLA…EAASLAKVQE (74 aa)) constitute a Carrier 1 domain. At serine 790 the chain carries O-(pantetheine 4'-phosphoryl)serine. The interval 867–1298 (EDVFPCTTMQ…ALDSLTLLQA (432 aa)) is condensation 1. Residues 1326 to 1715 (DGWVTRQPES…GRKDTQVKLR (390 aa)) are adenylation 2. Residues 1853 to 1930 (TAASELERTL…QLAAEFGEPA (78 aa)) enclose the Carrier 2 domain. Serine 1890 is subject to O-(pantetheine 4'-phosphoryl)serine. Disordered stretches follow at residues 1930–1960 (AGQS…DGVD) and 1993–2022 (GSSS…RVVS). 2 stretches are compositionally biased toward low complexity: residues 1933 to 1957 (SASS…STND) and 1993 to 2011 (GSSS…SSSS). The segment at 2063-2478 (EDIYPATALQ…ALSHSDRQTL (416 aa)) is condensation 2. The interval 2501 to 2893 (VRTPHAPAVC…IGRRDGQLKL (393 aa)) is adenylation 3. The Carrier 3 domain occupies 3029-3105 (RPVTAQEREM…QLMRHLSATR (77 aa)). Serine 3066 bears the O-(pantetheine 4'-phosphoryl)serine mark. Condensation regions lie at residues 3122-3587 (WVAL…TYDQ) and 3608-4027 (NIYP…EQLM). Residues 4052-4442 (HASREAVCAW…VGRKDNQIKF (391 aa)) are adenylation 4. Residues 4576 to 4652 (MPSTAAERKM…DLAYRTTNLV (77 aa)) enclose the Carrier 4 domain. O-(pantetheine 4'-phosphoryl)serine is present on serine 4613. Positions 4689–5016 (DVLPTTSFQR…LQTIVQHQNN (328 aa)) are condensation 5.

It belongs to the NRP synthetase family.

The protein operates within secondary metabolite biosynthesis. Functionally, nonribosomal peptide synthetase; part of the gene cluster that mediates the biosynthesis of malformins, cyclic pentapeptides with a disulfide bond between 2 consecutive cysteins, that show potential anti-tumor as well as antimalarial and antitrypanosomal properties. The nonribosomal peptide synthetase mlfA is responsible of the formation of the cyclic pentapeptide. The malformin biosynthesis clusters in malformin-producing fungi also contain enzymes involved in the formation of the disulfide bond between the two consecutive cysteins within malformins, in addition to additional tailoring enzymes such as methyltransferases or oxidoreductases. They are also composed of up to 4 major facilitator superfamily transporters, and transcription factors probably involved in the regulation of the expression of those clusters. The chain is Malformin synthetase mlfA from Aspergillus homomorphus (strain CBS 101889).